We begin with the raw amino-acid sequence, 388 residues long: Protein TsgA homolog (388 aa).

12 helical membrane passes run 12–32 (CISFLSYALTGALITITGIFL), 51–71 (TFLNAGILSSIFISSWITNII), 77–97 (LIFGFILTIIATLILIFSHNL), 102–122 (ISMFMLGIISGITMSIGTYII), 137–157 (LTDSFFSMSGIIFPIITALII), 163–183 (WYWVYFIIGIIYLIIFLITIN), 203–223 (FSILCLSISALLYILGQLSFI), 246–266 (SAFWMAYMVGMWIFSFILKFF), 272–292 (IITLSGISLFLMSLFNIFYDY), 294–314 (LLYIIILSLGFFSSAIYTIII), 331–351 (YILTSGTVGTLLTFIITGPIV), and 356–376 (IFSALLVSNILYGIVFFLVII).

It belongs to the major facilitator superfamily. TsgA family.

The protein resides in the cell membrane. This chain is Protein TsgA homolog, found in Buchnera aphidicola subsp. Baizongia pistaciae (strain Bp).